The primary structure comprises 209 residues: MDKTQLILLGLPIFLLCSDLFNLFTPPPPKSQHQSPPSISETLDFPAQKSTGVGYGNTVEINFCISCSYKGTAVSMKKMLESVFPGLDVVLANYPAPAPKRILAKVVPVAQVGVIGLIMGGEQIFPMIGIAQPPAWYHSLRANRFGSMASTWLLGNFLQSFLQSSGAFEVSCNGELVFSKLKEGRFPGEIELRDLISGTMTKPFVTGSY.

The signal sequence occupies residues 1–22; it reads MDKTQLILLGLPIFLLCSDLFN. A disulfide bridge links Cys64 with Cys67.

Belongs to the SelWTH family. SELT subfamily.

This Arabidopsis thaliana (Mouse-ear cress) protein is SelT-like protein.